The primary structure comprises 425 residues: Serine--tRNA ligase (425 aa).

231-233 (TAE) is an L-serine binding site. Residue 262–264 (RRE) participates in ATP binding. Glu285 contributes to the L-serine binding site. 349 to 352 (EISS) provides a ligand contact to ATP. Ser385 provides a ligand contact to L-serine.

Belongs to the class-II aminoacyl-tRNA synthetase family. Type-1 seryl-tRNA synthetase subfamily. As to quaternary structure, homodimer. The tRNA molecule binds across the dimer.

It localises to the cytoplasm. It carries out the reaction tRNA(Ser) + L-serine + ATP = L-seryl-tRNA(Ser) + AMP + diphosphate + H(+). It catalyses the reaction tRNA(Sec) + L-serine + ATP = L-seryl-tRNA(Sec) + AMP + diphosphate + H(+). The protein operates within aminoacyl-tRNA biosynthesis; selenocysteinyl-tRNA(Sec) biosynthesis; L-seryl-tRNA(Sec) from L-serine and tRNA(Sec): step 1/1. In terms of biological role, catalyzes the attachment of serine to tRNA(Ser). Is also able to aminoacylate tRNA(Sec) with serine, to form the misacylated tRNA L-seryl-tRNA(Sec), which will be further converted into selenocysteinyl-tRNA(Sec). The chain is Serine--tRNA ligase from Aquifex aeolicus (strain VF5).